The chain runs to 216 residues: Uracil-DNA glycosylase (216 aa).

Asp-59 serves as the catalytic Proton acceptor.

It belongs to the uracil-DNA glycosylase (UDG) superfamily. UNG family.

The protein localises to the cytoplasm. The enzyme catalyses Hydrolyzes single-stranded DNA or mismatched double-stranded DNA and polynucleotides, releasing free uracil.. Functionally, excises uracil residues from the DNA which can arise as a result of misincorporation of dUMP residues by DNA polymerase or due to deamination of cytosine. The chain is Uracil-DNA glycosylase from Idiomarina loihiensis (strain ATCC BAA-735 / DSM 15497 / L2-TR).